A 76-amino-acid polypeptide reads, in one-letter code: Conotoxin ArMLCL-022 (76 aa).

The signal sequence occupies residues Met1 to Ser19. Positions Asn20–Lys52 are excised as a propeptide.

Belongs to the conotoxin T superfamily. As to expression, expressed by the venom duct.

The protein resides in the secreted. This chain is Conotoxin ArMLCL-022, found in Conus arenatus (Sand-dusted cone).